A 599-amino-acid chain; its full sequence is UV-damage endonuclease (599 aa).

2 disordered regions span residues 89 to 224 (TELA…EKES) and 561 to 599 (IMGP…EDEK). The span at 97-115 (PHKKSTSTSTRKRARSSKK) shows a compositional bias: basic residues. The span at 116–127 (KATDSVSDKIDE) shows a compositional bias: basic and acidic residues. Positions 137 to 146 (HLRRSSRSKK) are enriched in basic residues.

This sequence belongs to the uve1/UvsE family.

Endonuclease for the repair of UV-irradiated DNA. Involved in the excision of cyclobutane pyrimidine dimers (CPD) and 6-4 pyrimidine pyrimidones (6-4PP) which forms the UV damage repair (UVDR) pathway. Also functions in oxidative damage repair in vivo. Provides back-up AP endonuclease activity to apn2 together with apn1. The protein is UV-damage endonuclease (uve1) of Schizosaccharomyces pombe (strain 972 / ATCC 24843) (Fission yeast).